We begin with the raw amino-acid sequence, 90 residues long: Accessory gland-specific peptide 26Ab (90 aa).

The first 21 residues, 1-21 (MNYFAVLCIFSCICFWQFSDA), serve as a signal peptide directing secretion.

As to expression, main cells of the accessory glands of males.

The protein localises to the secreted. It is found in the extracellular space. This protein is transferred from male to female during mating and may affect egglaying and behavior after mating. This Drosophila simulans (Fruit fly) protein is Accessory gland-specific peptide 26Ab (Acp26Ab).